The following is a 296-amino-acid chain: Deleted in azoospermia-like (296 aa).

Residues 1-18 are compositionally biased toward polar residues; the sequence is MSAANPETPNSTISREAN. Residues 1–25 are disordered; the sequence is MSAANPETPNSTISREANTQSSSAA. The 76-residue stretch at 40 to 115 folds into the RRM domain; that stretch reads NTVFVGGIDV…KKLKLGPAIR (76 aa). Residues 80–132 form a homodimerization region; the sequence is KGYGFVSFFNDVDVQKIVESQINFHGKKLKLGPAIRKQNLCAYHVQPRPLVFN. Residues 167–190 form the DAZ domain; sequence AYPPYPNSPVQVITGYQLPVYNYQ. Y277 is subject to Phosphotyrosine.

The protein belongs to the RRM DAZ family. As to quaternary structure, homodimer and heterodimer. Forms a heterodimer with DAZ. Interacts with BOLL, DAZAP1 and DAZAP2. Interacts with PUM2 Multiple DAZL RRMs can bind to a single RNA containing multiple GUU triplets. In terms of tissue distribution, testis specific.

It is found in the cytoplasm. The protein resides in the nucleus. Functionally, RNA-binding protein, which is essential for gametogenesis in both males and females. Plays a central role during spermatogenesis. Acts by binding to the 3'-UTR of mRNA, specifically recognizing GUU triplets, and thereby regulating the translation of key transcripts. The protein is Deleted in azoospermia-like (DAZL) of Callithrix jacchus (White-tufted-ear marmoset).